The chain runs to 359 residues: MIEFIDLKNQQARIKDKIDAGIQRVLRHGQYILGPEVTELEDRLADFVGAKYCISCANGTDALQIVQMALGVGPGDEVITPGFTYVATAETVALLGAKPVYVDIDPRTYNLDPQLLEAAITPRTKAIIPVSLYGQCADFDAINAIASKYGIPVIEDAAQSFGASYKGKRSCNLSTVACTSFFPSKPLGCYGDGGAIFTNDDELATAIRQIARHGQDRRYHHIRVGVNSRLDTLQAAILLPKLEIFEEEIALRQKVAAEYDLSLKQVGIGTPFIEVNNISVYAQYTVRMDNRESVQASLKAAGVPTAVHYPIPLNKQPAVADEKAKLPVGDKAATQVMSLPMHPYLDTASIKIICAALTN.

Residues glycine 29, tyrosine 31, and serine 184 each contribute to the UDP-2-acetamido-2-deoxy-alpha-D-ribo-hex-3-uluronate site. Position 185 is an N6-(pyridoxal phosphate)lysine (lysine 185). Positions 229, 308, and 309 each coordinate UDP-2-acetamido-2-deoxy-alpha-D-ribo-hex-3-uluronate.

The protein belongs to the DegT/DnrJ/EryC1 family. In terms of assembly, homodimer. It depends on pyridoxal 5'-phosphate as a cofactor.

The enzyme catalyses UDP-2-acetamido-2-deoxy-alpha-D-ribo-hex-3-uluronate + L-glutamate = UDP-2-acetamido-3-amino-2,3-dideoxy-alpha-D-glucuronate + 2-oxoglutarate. It participates in bacterial outer membrane biogenesis; LPS O-antigen biosynthesis. Its function is as follows. Plays a role in the biosynthesis of B-band O antigen for serotype O5. Catalyzes the amination of UDP-2-acetamido-2-deoxy-3-oxo-D-glucuronic acid (UDP-3-oxo-D-GlcNAcA) to UDP-2-acetamido-3-amino-2,3-dideoxy-D-glucuronic acid (UDP-GlcNAc3NA), using L-glutamate as the preferred amine donor. This is UDP-2-acetamido-2-deoxy-3-oxo-D-glucuronate aminotransferase from Pseudomonas aeruginosa (strain ATCC 15692 / DSM 22644 / CIP 104116 / JCM 14847 / LMG 12228 / 1C / PRS 101 / PAO1).